Here is a 246-residue protein sequence, read N- to C-terminus: Probable 2-phosphosulfolactate phosphatase (246 aa).

Belongs to the ComB family. Requires Mg(2+) as cofactor.

The enzyme catalyses (2R)-O-phospho-3-sulfolactate + H2O = (2R)-3-sulfolactate + phosphate. This Nostoc punctiforme (strain ATCC 29133 / PCC 73102) protein is Probable 2-phosphosulfolactate phosphatase.